The chain runs to 306 residues: Recombination-associated protein RdgC (306 aa).

This sequence belongs to the RdgC family.

Its subcellular location is the cytoplasm. It is found in the nucleoid. In terms of biological role, may be involved in recombination. The protein is Recombination-associated protein RdgC of Pseudomonas syringae pv. syringae (strain B728a).